The following is a 666-amino-acid chain: E3 ubiquitin-protein ligase MBR2 (666 aa).

Composition is skewed to polar residues over residues 1-14, 23-35, 42-58, and 73-88; these read MQGPRSTGDSSTGI, CSTNSETTSNNIL, FPNNTTGSGRPTYASSS, and SSSRLGPSDHLNSNGS. Disordered regions lie at residues 1–58, 73–95, 155–179, 221–329, 400–433, and 457–491; these read MQGP…ASSS, SSSRLGPSDHLNSNGSKTDRQLL, SLGSSSQTAEERSSGPGSSLGGLGS, SSLS…DGQP, NPSTSGDSPFVPRAGSSSGIHGLQPNPTWVTPHN, and GASLPLLPTGPSVSSNEAAAPSGSSSRSHRSRQRR. Over residues 221-239 the composition is skewed to low complexity; the sequence is SSLSLSMPSQNSPNVNNQS. Polar residues-rich tracts occupy residues 258–268, 286–303, and 414–433; these read AFPSTRSTETI, FSFTQSGSSVRQQQQLPA, and GSSSGIHGLQPNPTWVTPHN. The RING-type; atypical zinc finger occupies 619–660; that stretch reads CCVCQEEYAEGDDLGTLGCGHEFHTACVKQWLMLKNLCPICK.

Belongs to the RING-type zinc finger family. In terms of assembly, interacts with MED25 and UBC11.

It catalyses the reaction S-ubiquitinyl-[E2 ubiquitin-conjugating enzyme]-L-cysteine + [acceptor protein]-L-lysine = [E2 ubiquitin-conjugating enzyme]-L-cysteine + N(6)-ubiquitinyl-[acceptor protein]-L-lysine.. It participates in protein modification; protein ubiquitination. E3 ubiquitin-protein ligase that functions as a regulator of MED25 stability by targeting MED25 for degradation in a RING-H2-dependent way. Proteasome-dependent degradation of MED25 seems to activate its function as positive regulator of FLOWERING LOCUS T (FT) and is important to induce the expression of FT and consequently to promote flowering. May function downstream of HAL3 and be required for HAL3-regulated plant growth. Activation of MBR2 by HAL3 may lead to the degradation of cell cycle suppressors, resulting in enhancement of cell division and plant growth. The sequence is that of E3 ubiquitin-protein ligase MBR2 (MBR2) from Arabidopsis thaliana (Mouse-ear cress).